Here is a 95-residue protein sequence, read N- to C-terminus: Co-chaperonin GroES (95 aa).

This sequence belongs to the GroES chaperonin family. Heptamer of 7 subunits arranged in a ring. Interacts with the chaperonin GroEL.

It is found in the cytoplasm. Functionally, together with the chaperonin GroEL, plays an essential role in assisting protein folding. The GroEL-GroES system forms a nano-cage that allows encapsulation of the non-native substrate proteins and provides a physical environment optimized to promote and accelerate protein folding. GroES binds to the apical surface of the GroEL ring, thereby capping the opening of the GroEL channel. The protein is Co-chaperonin GroES of Alkalilimnicola ehrlichii (strain ATCC BAA-1101 / DSM 17681 / MLHE-1).